A 365-amino-acid polypeptide reads, in one-letter code: Phosphoserine aminotransferase (365 aa).

R40 serves as a coordination point for L-glutamate. Residues 74-75 (AS), F99, T155, D177, and Q200 each bind pyridoxal 5'-phosphate. Residue K201 is modified to N6-(pyridoxal phosphate)lysine. 241–242 (NT) is a pyridoxal 5'-phosphate binding site.

The protein belongs to the class-V pyridoxal-phosphate-dependent aminotransferase family. SerC subfamily. Homodimer. Pyridoxal 5'-phosphate serves as cofactor.

Its subcellular location is the cytoplasm. The catalysed reaction is O-phospho-L-serine + 2-oxoglutarate = 3-phosphooxypyruvate + L-glutamate. It catalyses the reaction 4-(phosphooxy)-L-threonine + 2-oxoglutarate = (R)-3-hydroxy-2-oxo-4-phosphooxybutanoate + L-glutamate. Its pathway is amino-acid biosynthesis; L-serine biosynthesis; L-serine from 3-phospho-D-glycerate: step 2/3. Functionally, catalyzes the reversible conversion of 3-phosphohydroxypyruvate to phosphoserine and of 3-hydroxy-2-oxo-4-phosphonooxybutanoate to phosphohydroxythreonine. The sequence is that of Phosphoserine aminotransferase from Lactococcus lactis subsp. cremoris (strain MG1363).